A 297-amino-acid polypeptide reads, in one-letter code: ClpXP adapter protein SpxH (297 aa).

The protein belongs to the SpxH family. In terms of assembly, interacts with Spx.

It localises to the cytoplasm. Adapter protein required for efficient degradation of Spx by ClpXP under non-stress conditions. Interaction with Spx stabilizes Spx and exposes the C-terminus of Spx for recognition and proteolysis by ClpXP. In Bacillus cereus (strain ATCC 10987 / NRS 248), this protein is ClpXP adapter protein SpxH.